Here is a 757-residue protein sequence, read N- to C-terminus: Filensin (757 aa).

Residues 1 to 39 (MYRRSYVFQTRKEQYERAEEAPRAAEPDRLAEARAAAPN) form a head region. Ser-5 carries the phosphoserine modification. Residues 39–319 (NLAALQGLGE…RIIENEGNRL (281 aa)) enclose the IF rod domain. A coil 1A region spans residues 40 to 74 (LAALQGLGERVAAHVQRARALEQRHAVLRRQLDAF). N-acetylalanine is present on Ala-41. Residues 75–83 (QRLDELAGP) are linker 1. The coil 1B stretch occupies residues 84–183 (EDALARHVEG…RYKKNLLEIQ (100 aa)). The segment at 184-200 (TYVTILQQIIQTTPQAA) is linker 12. The segment at 201–319 (AITSGMREEK…RIIENEGNRL (119 aa)) is coil 2. Residues 320–756 (SSAFIETPIT…KKLGEKGSSS (437 aa)) form a tail region. Ser-340 and Ser-419 each carry phosphoserine. Disordered stretches follow at residues 406-436 (EGES…GGKI) and 493-705 (GVVV…PPRK). A lipid anchor (N-myristoyl glycine) is attached at Gly-433. The segment covering 493-512 (GVVVSKGDDSVPPDSGVEPS) has biased composition (low complexity). Ser-512 is modified (phosphoserine). Residues 528–658 (QEKEDGLKEE…KQDDQKEEGA (131 aa)) show a composition bias toward basic and acidic residues. Repeat 1 spans residues 532–545 (DGLKEEGGPPEGKG). Residues 532 to 622 (DGLKEEGGPP…EEEGPLQKKE (91 aa)) are 7 X 14 AA tandem repeats. The stretch at 546–552 (EPPEGKG) is one 2; truncated repeat. Repeat copies occupy residues 553-566 (DSVK…EGKG), 567-580 (DGVK…EGKG), 581-594 (DGVK…EGKG), 595-608 (DGVK…EGKG), and 609-622 (EGLK…QKKE). A phosphothreonine mark is found at Thr-628 and Thr-674. Residues Ser-701, Ser-754, and Ser-755 each carry the phosphoserine modification.

The protein belongs to the intermediate filament family. Part of a complex required for lens intermediate filament formation composed of BFSP1, BFSP2 and CRYAA. Identified in a complex that contains VIM, EZR, AHNAK, BFSP1, BFSP2, ANK2, PLEC, PRX and spectrin. Found in a complex composed of PPL (via C-terminal linker domain), BFSP1 and BFSP2 in the retinal lens. Within the complex interacts with BFSP2. Interacts (via C-terminus) with MIP (via C-terminus) in aged lens fiber cells. In terms of processing, proteolytically cleaved during lens cell fiber differentiation with increased fragmentation as fiber cell age increases. Post-translationally, myristoylated at Gly-433 following proteolytic cleavage at Asp-432. Acetylated at Ala-41 following proteolytic cleavage at Leu-40. Abundantly expressed in both the inner and outer cortex of the retina, expressed at a lower level in the nucleus of the retina (at protein level). Detected in eye lens fiber cells (at protein level).

It is found in the cell membrane. Its subcellular location is the cytoplasm. The protein resides in the cytoskeleton. The protein localises to the cell cortex. In terms of biological role, required for the correct formation of lens intermediate filaments as part of a complex composed of BFSP1, BFSP2 and CRYAA. Involved in altering the calcium regulation of MIP water permeability. This chain is Filensin (BFSP1), found in Bos taurus (Bovine).